A 265-amino-acid polypeptide reads, in one-letter code: tRNA (guanine-N(7)-)-methyltransferase (265 aa).

S-adenosyl-L-methionine is bound by residues glutamate 96, glutamate 121, aspartate 148, and aspartate 170. Aspartate 170 is an active-site residue. Positions 174 and 206 each coordinate substrate.

The protein belongs to the class I-like SAM-binding methyltransferase superfamily. TrmB family.

The enzyme catalyses guanosine(46) in tRNA + S-adenosyl-L-methionine = N(7)-methylguanosine(46) in tRNA + S-adenosyl-L-homocysteine. Its pathway is tRNA modification; N(7)-methylguanine-tRNA biosynthesis. In terms of biological role, catalyzes the formation of N(7)-methylguanine at position 46 (m7G46) in tRNA. This is tRNA (guanine-N(7)-)-methyltransferase from Rhodopseudomonas palustris (strain ATCC BAA-98 / CGA009).